Here is a 706-residue protein sequence, read N- to C-terminus: Choline transporter-like protein 2 (706 aa).

Topologically, residues 1-33 (MGDERPHYYGKHGTPQKYDPTFKGPIYNRGCTD) are cytoplasmic. Thr14 carries the phosphothreonine modification. A helical membrane pass occupies residues 34 to 54 (IICCVFLLLAIVGYVAVGIIA). Residues 55 to 232 (WTHGDPRKVI…RIFEDYTVSW (178 aa)) are Extracellular-facing. 2 N-linked (GlcNAc...) asparagine glycosylation sites follow: Asn187 and Asn200. Residues 233-253 (YWIIIGLVIAMAMSLLFIILL) traverse the membrane as a helical segment. The Cytoplasmic portion of the chain corresponds to 254 to 256 (RFL). Residues 257–277 (AGIMVWVMIIMVILVLGYGIF) traverse the membrane as a helical segment. Residues 278 to 315 (HCYMEYSRLRGEAGSDVSLVDLGFQTDFRVYLHLRQTW) lie on the Extracellular side of the membrane. The helical transmembrane segment at 316–336 (LAFMIILSILEVIIILLLIFL) threads the bilayer. Residues 337–364 (RKRILIAIALIKEASRAVGYVMCSLLYP) are Cytoplasmic-facing. A helical membrane pass occupies residues 365 to 385 (LVTFFLLCLCIAYWASTAVFL). Topologically, residues 386–457 (STSNEAVYKI…FNAFMFFWLA (72 aa)) are extracellular. N-linked (GlcNAc...) asparagine glycosylation occurs at Asn417. A helical membrane pass occupies residues 458–480 (NFVLALGQVTLAGAFASYYWALR). The Cytoplasmic portion of the chain corresponds to 481-504 (KPDDLPAFPLFSAFGRALRYHTGS). A helical transmembrane segment spans residues 505–525 (LAFGALILAIVQIIRVILEYL). The Extracellular portion of the chain corresponds to 526-563 (DQRLKAAENKFAKCLMTCLKCCFWCLEKFIKFLNRNAY). Residues 564–584 (IMIAIYGTNFCTSARNAFFLL) traverse the membrane as a helical segment. The Cytoplasmic portion of the chain corresponds to 585–599 (MRNIIRVAVLDKVTD). The helical transmembrane segment at 600–620 (FLFLLGKLLIVGSVGILAFFF) threads the bilayer. The Extracellular segment spans residues 621–638 (FTHRIRIVQDTAPPLNYY). A helical transmembrane segment spans residues 639–659 (WVPILTVIVGSYLIAHGFFSV). Topologically, residues 660–706 (YGMCVDTLFLCFLEDLERNDGSAERPYFMSSTLKKLLNKTNKKAAES) are cytoplasmic.

This sequence belongs to the CTL (choline transporter-like) family. In terms of assembly, interacts with COCH. In terms of tissue distribution, present in supporting cells of the inner ear (at protein level). As to expression, expressed in inner ear vestibular tissue.

The protein resides in the cell membrane. It localises to the mitochondrion outer membrane. It catalyses the reaction choline(out) + n H(+)(in) = choline(in) + n H(+)(out). The catalysed reaction is ethanolamine(out) + n H(+)(in) = ethanolamine(in) + n H(+)(out). In terms of biological role, choline/H+ antiporter, mainly in mitochodria. Also acts as a low-affinity ethanolamine/H+ antiporter, regulating the supply of extracellular ethanolamine (Etn) for the CDP-Etn pathway, redistribute intracellular Etn and balance the CDP-Cho and CDP-Etn arms of the Kennedy pathway. Does not exhibit choline transporter activity. This chain is Choline transporter-like protein 2, found in Homo sapiens (Human).